We begin with the raw amino-acid sequence, 548 residues long: MKKVTAMLFSMAVGLNAVSMAAKAKASEEQETDVLLIGGGIMSATLGTYLRELEPEWSMTMVERLEGVAQESSNGWNNAGTGHSALMELNYTPQNADGSISIEKAVAINEAFQISRQFWAHQVERGVLRTPRSFINTVPHMSFVWGEDNVNFLRARYAALQQSSLFRGMRYSEDHAQIKEWAPLVMEGRDPQQKVAATRTEIGTDVNYGEITRQLIASLQKKSNFSLQLSSEVRALKRNDDNTWTVTVADLKNGTAQNIRAKFVFIGAGGAALKLLQESGIPEAKDYAGFPVGGQFLVSENPDVVNHHLAKVYGKASVGAPPMSVPHIDTRVLDGKRVVLFGPFATFSTKFLKNGSLWDLMSSTTTSNVMPMMHVGLDNFDLVKYLVSQVMLSEEDRFEALKEYYPQAKKEDWRLWQAGQRVQIIKRDAEKGGVLRLGTEVVSDQQGTIAALLGASPGASTAAPIMLNLLEKVFGDRVSSPQWQATLKAIVPSYGRKLNGDVAATERELQYTSEVLGLNYDKPQAADSTPKPQLKPQPVQKEVADIAL.

Residues 521 to 548 (DKPQAADSTPKPQLKPQPVQKEVADIAL) form a disordered region. The span at 530-541 (PKPQLKPQPVQK) shows a compositional bias: low complexity.

This sequence belongs to the MQO family. Requires FAD as cofactor.

It carries out the reaction (S)-malate + a quinone = a quinol + oxaloacetate. The protein operates within carbohydrate metabolism; tricarboxylic acid cycle; oxaloacetate from (S)-malate (quinone route): step 1/1. The chain is Malate:quinone oxidoreductase (mqo) from Escherichia coli (strain K12).